Consider the following 772-residue polypeptide: TBC domain-containing protein C4G8.04 (772 aa).

Residues 143–161 (SFFPSSQEPSIPENPSSLT) show a composition bias toward polar residues. 2 disordered regions span residues 143 to 163 (SFFPSSQEPSIPENPSSLTGE) and 275 to 294 (KFFRSSPRCSTPSVSSTFVS). A compositionally biased stretch (low complexity) spans 275-291 (KFFRSSPRCSTPSVSST). At Thr395 the chain carries Phosphothreonine. The region spanning 504–693 (GVPLCYKAKV…RIFDMLFCDG (190 aa)) is the Rab-GAP TBC domain.

This chain is TBC domain-containing protein C4G8.04, found in Schizosaccharomyces pombe (strain 972 / ATCC 24843) (Fission yeast).